Reading from the N-terminus, the 673-residue chain is Ion-translocating oxidoreductase complex subunit C (673 aa).

4Fe-4S ferredoxin-type domains lie at M368–Y397 and K407–F436. [4Fe-4S] cluster is bound by residues C377, C380, C383, C387, C416, C419, C422, and C426. The segment at E529 to P554 is disordered.

This sequence belongs to the 4Fe4S bacterial-type ferredoxin family. RnfC subfamily. The complex is composed of six subunits: RsxA, RsxB, RsxC, RsxD, RsxE and RsxG. The cofactor is [4Fe-4S] cluster.

The protein localises to the cell inner membrane. In terms of biological role, part of a membrane-bound complex that couples electron transfer with translocation of ions across the membrane. Required to maintain the reduced state of SoxR. In Salmonella arizonae (strain ATCC BAA-731 / CDC346-86 / RSK2980), this protein is Ion-translocating oxidoreductase complex subunit C.